The primary structure comprises 184 residues: Phosphonoformate cytidylyltransferase (184 aa).

It carries out the reaction phosphonoformate + CTP = CMP-5'-phosphonoformate + diphosphate. The protein operates within secondary metabolite biosynthesis; bialaphos biosynthesis. In terms of biological role, catalyzes the displacement of the beta- and gamma-phosphates of CTP by phosphonoformate to produce CMP-5'-phosphonoformate, an intermediate in the biosynthesis of phosphinothricin tripeptide (PTT), also known as bialaphos (BA), a natural-product antibiotic and potent herbicide. The sequence is that of Phosphonoformate cytidylyltransferase from Streptomyces viridochromogenes (strain DSM 40736 / JCM 4977 / BCRC 1201 / Tue 494).